The following is a 314-amino-acid chain: Ribonuclease Z (314 aa).

Zn(2+) contacts are provided by His-60, His-62, Asp-64, His-65, His-140, Asp-209, and His-269. Catalysis depends on Asp-64, which acts as the Proton acceptor.

Belongs to the RNase Z family. Homodimer. It depends on Zn(2+) as a cofactor.

It catalyses the reaction Endonucleolytic cleavage of RNA, removing extra 3' nucleotides from tRNA precursor, generating 3' termini of tRNAs. A 3'-hydroxy group is left at the tRNA terminus and a 5'-phosphoryl group is left at the trailer molecule.. Its function is as follows. Zinc phosphodiesterase, which displays some tRNA 3'-processing endonuclease activity. Probably involved in tRNA maturation, by removing a 3'-trailer from precursor tRNA. The sequence is that of Ribonuclease Z from Methanococcus maripaludis (strain C5 / ATCC BAA-1333).